The primary structure comprises 204 residues: Viral interleukin-6 homolog (204 aa).

The signal sequence occupies residues 1-22 (MRWFKLWSILLVGSLLVSGTRG).

It belongs to the IL-6 superfamily. In terms of assembly, interacts with host IL6ST.

Its function is as follows. Initiates signal transduction through binding to interleukin-6 receptor subunit beta IL6ST, independently of the cognate IL6 receptor IL6R. In infected primary effusion lymphoma cells, promotes proliferation of cells, protects them from apoptosis, and promotes immune evasion of interferon activity. Also drives blood to lymphatic endothelial cell differentiation. This Homo sapiens (Human) protein is Viral interleukin-6 homolog (K2).